Here is a 711-residue protein sequence, read N- to C-terminus: 1,4-alpha-glucan-branching enzyme (711 aa).

Positions 98 and 135 each coordinate (1,4-alpha-D-glucosyl)n. Asp353 acts as the Nucleophile in catalysis. The Proton donor role is filled by Glu414.

It belongs to the glycosyl hydrolase 13 family. GlgB subfamily.

The protein resides in the cytoplasm. The catalysed reaction is Transfers a segment of a (1-&gt;4)-alpha-D-glucan chain to a primary hydroxy group in a similar glucan chain.. It functions in the pathway glycan biosynthesis; glycogen biosynthesis. Glycogen-branching enzyme participates in the glycogen biosynthetic process along with glycogenin and glycogen synthase. Generates alpha-1,6-glucosidic branches from alpha-1,4-linked glucose chains, to increase solubility of the glycogen polymer. This chain is 1,4-alpha-glucan-branching enzyme (GLC3), found in Debaryomyces hansenii (strain ATCC 36239 / CBS 767 / BCRC 21394 / JCM 1990 / NBRC 0083 / IGC 2968) (Yeast).